A 293-amino-acid polypeptide reads, in one-letter code: tRNA pseudouridine synthase B (293 aa).

Catalysis depends on Asp-38, which acts as the Nucleophile.

Belongs to the pseudouridine synthase TruB family. Type 1 subfamily.

The catalysed reaction is uridine(55) in tRNA = pseudouridine(55) in tRNA. In terms of biological role, responsible for synthesis of pseudouridine from uracil-55 in the psi GC loop of transfer RNAs. The chain is tRNA pseudouridine synthase B from Trichormus variabilis (strain ATCC 29413 / PCC 7937) (Anabaena variabilis).